Reading from the N-terminus, the 1213-residue chain is A disintegrin and metalloproteinase with thrombospondin motifs 19 (1213 aa).

Positions 1-27 (MGKNREMRLTHICCCCLLYQLGFLSNG) are cleaved as a signal peptide. Residues 28 to 322 (IVSELQFAPD…KIAESGRGKR (295 aa)) constitute a propeptide that is removed on maturation. Disordered regions lie at residues 49–161 (WRRE…PPPA) and 192–215 (FLAP…AASA). Residues 52–71 (EPVDPAGGSGGSADPGWVRG) are compositionally biased toward gly residues. Residues 110-119 (RPPPPSEGEE) show a composition bias toward acidic residues. The segment covering 120-139 (DEELESQELPRGSSGAAALS) has biased composition (low complexity). A compositionally biased stretch (pro residues) spans 140–155 (PGAPASWQPPPPPQPP). A glycan (N-linked (GlcNAc...) asparagine) is linked at asparagine 266. A Cysteine switch motif is present at residues 298 to 305 (HYCGIISD). A Zn(2+)-binding site is contributed by cysteine 300. Residues 331–551 (YNIETVVVAD…KASNCLLQTN (221 aa)) form the Peptidase M12B domain. Intrachain disulfides connect cysteine 407–cysteine 472, cysteine 447–cysteine 454, cysteine 466–cysteine 546, cysteine 505–cysteine 530, cysteine 575–cysteine 599, cysteine 586–cysteine 607, cysteine 594–cysteine 626, cysteine 620–cysteine 631, cysteine 651–cysteine 686, cysteine 655–cysteine 691, and cysteine 666–cysteine 676. Zn(2+) is bound at residue histidine 488. Glutamate 489 is a catalytic residue. Positions 492 and 498 each coordinate Zn(2+). A Disintegrin domain is found at 552-639 (PQSVNSVMVP…ECTSRTSAPE (88 aa)). Positions 640-692 (HLAGEWSLWSPCSRTCSAGISSRERKCPGLDSEARDCNGPRKQYRICENPPCP) constitute a TSP type-1 1 domain. The tract at residues 797 to 920 (IIKGDFNHTR…PENQSSKAPE (124 aa)) is spacer. N-linked (GlcNAc...) asparagine glycans are attached at residues asparagine 803, asparagine 913, asparagine 955, and asparagine 1015. TSP type-1 domains are found at residues 921 to 981 (PLFM…NEQP), 982 to 1043 (CQTR…QDCM), 1045 to 1089 (VWEA…EDCE), and 1093 to 1150 (KCYV…QPCN). 3 disulfide bridges follow: cysteine 994-cysteine 1037, cysteine 998-cysteine 1042, and cysteine 1009-cysteine 1026. One can recognise a PLAC domain in the interval 1166–1205 (LTFKCLGDQWPVYCRVIREKNLCQDMRWYQRCCETCRDFY).

Zn(2+) is required as a cofactor. In terms of processing, the precursor is cleaved by a furin endopeptidase. Post-translationally, glycosylated. Can be O-fucosylated by POFUT2 on a serine or a threonine residue found within the consensus sequence C1-X(2)-(S/T)-C2-G of the TSP type-1 repeat domains where C1 and C2 are the first and second cysteine residue of the repeat, respectively. Fucosylated repeats can then be further glycosylated by the addition of a beta-1,3-glucose residue by the glucosyltransferase, B3GALTL. Fucosylation mediates the efficient secretion of ADAMTS family members. Can also be C-glycosylated with one or two mannose molecules on tryptophan residues within the consensus sequence W-X-X-W of the TPRs, and N-glycosylated. These other glycosylations can also facilitate secretion. Expressed in fetal lung, but not in any adult tissues examined. Expression was detected in an osteosarcoma cDNA library.

It is found in the secreted. It localises to the extracellular space. Its subcellular location is the extracellular matrix. In Homo sapiens (Human), this protein is A disintegrin and metalloproteinase with thrombospondin motifs 19 (ADAMTS19).